We begin with the raw amino-acid sequence, 387 residues long: Alpha-sarcoglycan (387 aa).

The first 23 residues, 1 to 23 (MAAAVTWIPLLAGLLAGLRDTKA), serve as a signal peptide directing secretion. The Extracellular portion of the chain corresponds to 24–293 (QQTTLHLLVG…RDFLTDALVT (270 aa)). N-linked (GlcNAc...) asparagine glycans are attached at residues Asn-174 and Asn-246. The helical transmembrane segment at 294–314 (LLVPLLVALLLTLLLAYIMCF) threads the bilayer. At 315–387 (RREGRLKRDM…AQMPLILDQH (73 aa)) the chain is on the cytoplasmic side. Ser-377 is modified (phosphoserine).

This sequence belongs to the sarcoglycan alpha/epsilon family. As to quaternary structure, cross-link to form 2 major subcomplexes: one consisting of SGCB, SGCD and SGCG and the other consisting of SGCB and SGCD. The association between SGCB and SGCG is particularly strong while SGCA is loosely associated with the other sarcoglycans. Interacts with the syntrophin SNTA1. In terms of tissue distribution, striated muscle, both skeletal and cardiac.

It is found in the cell membrane. Its subcellular location is the sarcolemma. The protein localises to the cytoplasm. It localises to the cytoskeleton. Component of the sarcoglycan complex, a subcomplex of the dystrophin-glycoprotein complex which forms a link between the F-actin cytoskeleton and the extracellular matrix. This chain is Alpha-sarcoglycan (Sgca), found in Mus musculus (Mouse).